The following is a 305-amino-acid chain: Glycine--tRNA ligase alpha subunit (305 aa).

The protein belongs to the class-II aminoacyl-tRNA synthetase family. As to quaternary structure, tetramer of two alpha and two beta subunits.

It localises to the cytoplasm. The enzyme catalyses tRNA(Gly) + glycine + ATP = glycyl-tRNA(Gly) + AMP + diphosphate. This is Glycine--tRNA ligase alpha subunit (glyQ) from Vibrio cholerae serotype O1 (strain ATCC 39315 / El Tor Inaba N16961).